Reading from the N-terminus, the 155-residue chain is Small ribosomal subunit protein uS7c (155 aa).

The protein belongs to the universal ribosomal protein uS7 family. Part of the 30S ribosomal subunit.

It localises to the plastid. Its function is as follows. One of the primary rRNA binding proteins, it binds directly to 16S rRNA where it nucleates assembly of the head domain of the 30S subunit. The protein is Small ribosomal subunit protein uS7c (rps7) of Aneura mirabilis (Parasitic liverwort).